Here is a 292-residue protein sequence, read N- to C-terminus: Probable E3 ubiquitin-protein ligase RNF144A (292 aa).

Residues 16–236 (PLVSCKLCLG…YDKGPCRNKL (221 aa)) form a TRIAD supradomain region. The Zn(2+) site is built by Cys20, Cys23, Cys43, Cys46, Cys111, Cys116, Cys135, Cys138, Cys143, Cys146, His151, Cys156, Cys185, and Cys188. The RING-type 1 zinc-finger motif lies at 20-70 (CKLCLGEYTVEQMTTIAQCQCIFCTLCLKQYVELLIKEGLETAISCPDASC). The segment at 91–156 (QKYKKLQFEK…KANWHPGQGC (66 aa)) adopts an IBR-type zinc-finger fold. The RING-type 2; atypical zinc finger occupies 185–214 (CPKCKVYIERDEGCAQMMCKNCKHAFCWYC). Residue Cys198 is part of the active site. Cys203, Cys206, Cys211, Cys214, His226, and Cys232 together coordinate Zn(2+). Residues 250-270 (VVGIFAGFGLLLLVASPFLLL) form a helical membrane-spanning segment.

It belongs to the RBR family. RNF144 subfamily.

The protein localises to the membrane. The catalysed reaction is [E2 ubiquitin-conjugating enzyme]-S-ubiquitinyl-L-cysteine + [acceptor protein]-L-lysine = [E2 ubiquitin-conjugating enzyme]-L-cysteine + [acceptor protein]-N(6)-ubiquitinyl-L-lysine.. It functions in the pathway protein modification; protein ubiquitination. Functionally, E3 ubiquitin-protein ligase which accepts ubiquitin from E2 ubiquitin-conjugating enzymes ube2l3 and ube2l6 in the form of a thioester and then directly transfers the ubiquitin to targeted substrates. This Xenopus tropicalis (Western clawed frog) protein is Probable E3 ubiquitin-protein ligase RNF144A (rnf144a).